The primary structure comprises 156 residues: Ribosomal RNA large subunit methyltransferase H (156 aa).

Residues L73, G104, and I123–L128 contribute to the S-adenosyl-L-methionine site.

It belongs to the RNA methyltransferase RlmH family. In terms of assembly, homodimer.

The protein localises to the cytoplasm. The catalysed reaction is pseudouridine(1915) in 23S rRNA + S-adenosyl-L-methionine = N(3)-methylpseudouridine(1915) in 23S rRNA + S-adenosyl-L-homocysteine + H(+). Functionally, specifically methylates the pseudouridine at position 1915 (m3Psi1915) in 23S rRNA. This chain is Ribosomal RNA large subunit methyltransferase H, found in Stenotrophomonas maltophilia (strain K279a).